Here is a 464-residue protein sequence, read N- to C-terminus: NADH-quinone oxidoreductase subunit N (464 aa).

14 consecutive transmembrane segments (helical) span residues 6–26, 36–56, 75–95, 101–121, 123–143, 157–177, 197–217, 231–253, 257–279, 293–313, 317–337, 360–380, 395–415, and 439–459; these read FLYIVPEITVLGSALALLVLG, SMSLISVAIAAVLACKELIYF, CLARAVVAVSGLFAFLLFFFA, YEFAVLMLFAFLGTLTLVEAH, FLSFYLSFELIGFASYILVCF, FFVLGALSSCIMLYGISLVYG, LGATFGCALVLVGLLFKLGAV, PTVAVVFFTIVTKTAMVLVFAGL, VVIPITGFVWSMLLMAALSMVVG, FAYANIGHIGYVLAGMSTGVV, PVLFYVVTYLLINVWIFTVLL, AFTFVAALLASAGLPPFSGFF, FGVPTLVCVVFLCLTSIIPCF, and NVGLSIMAFVAVTLSLVVVLL.

Belongs to the complex I subunit 2 family. NDH-1 is composed of 14 different subunits. Subunits NuoA, H, J, K, L, M, N constitute the membrane sector of the complex.

The protein resides in the cell inner membrane. It carries out the reaction a quinone + NADH + 5 H(+)(in) = a quinol + NAD(+) + 4 H(+)(out). NDH-1 shuttles electrons from NADH, via FMN and iron-sulfur (Fe-S) centers, to quinones in the respiratory chain. The immediate electron acceptor for the enzyme in this species is believed to be ubiquinone. Couples the redox reaction to proton translocation (for every two electrons transferred, four hydrogen ions are translocated across the cytoplasmic membrane), and thus conserves the redox energy in a proton gradient. This chain is NADH-quinone oxidoreductase subunit N, found in Anaplasma phagocytophilum (strain HZ).